A 686-amino-acid polypeptide reads, in one-letter code: L-type lectin-domain containing receptor kinase VII.1 (686 aa).

An N-terminal signal peptide occupies residues 1-20; sequence MKALLFLLTLFLILPNPISA. The interval 21 to 256 is legume-lectin like; it reads IDFIFNGFND…SHKILAWSFS (236 aa). Residues 21–286 lie on the Extracellular side of the membrane; sequence IDFIFNGFND…PKDSIVKAKW (266 aa). 10 N-linked (GlcNAc...) asparagine glycosylation sites follow: asparagine 29, asparagine 34, asparagine 52, asparagine 64, asparagine 111, asparagine 123, asparagine 168, asparagine 203, asparagine 224, and asparagine 259. A helical transmembrane segment spans residues 287-307; it reads FVFVLVLICFLVVALVGLVLF. The Cytoplasmic segment spans residues 308-686; it reads AVVRKRLERA…SWNSSILEGR (379 aa). The Protein kinase domain occupies 347–628; that stretch reads FDEKNVIGIG…VFEGDKAEIF (282 aa). ATP-binding positions include 353–361 and lysine 376; that span reads IGIGGNGKV. Aspartate 475 serves as the catalytic Proton acceptor.

It in the C-terminal section; belongs to the protein kinase superfamily. Ser/Thr protein kinase family. This sequence in the N-terminal section; belongs to the leguminous lectin family.

It is found in the cell membrane. The catalysed reaction is L-seryl-[protein] + ATP = O-phospho-L-seryl-[protein] + ADP + H(+). The enzyme catalyses L-threonyl-[protein] + ATP = O-phospho-L-threonyl-[protein] + ADP + H(+). The sequence is that of L-type lectin-domain containing receptor kinase VII.1 (LECRK71) from Arabidopsis thaliana (Mouse-ear cress).